The primary structure comprises 931 residues: Phosphoenolpyruvate carboxylase (931 aa).

Active-site residues include His-138 and Lys-594.

This sequence belongs to the PEPCase type 1 family. Mg(2+) is required as a cofactor.

The catalysed reaction is oxaloacetate + phosphate = phosphoenolpyruvate + hydrogencarbonate. Forms oxaloacetate, a four-carbon dicarboxylic acid source for the tricarboxylic acid cycle. The protein is Phosphoenolpyruvate carboxylase of Streptococcus agalactiae serotype III (strain NEM316).